The primary structure comprises 561 residues: uncharacterized protein (561 aa).

The first 24 residues, 1-24, serve as a signal peptide directing secretion; that stretch reads MELGAWRSILYIAFLFAITRHAFC. Topologically, residues 25–509 are lumenal; it reads KAVNLVHSPE…GYVYLSEIKQ (485 aa). Residues 510-530 traverse the membrane as a helical segment; sequence YSSLILISLWISLILFVSFLN. Residues 531–561 lie on the Cytoplasmic side of the membrane; it reads RRLILHYSFESVHQLKTLTRKFIYSSLLKQD.

It is found in the endoplasmic reticulum membrane. Its subcellular location is the golgi apparatus membrane. This is an uncharacterized protein from Schizosaccharomyces pombe (strain 972 / ATCC 24843) (Fission yeast).